An 808-amino-acid polypeptide reads, in one-letter code: Tegument protein UL47 homolog (808 aa).

2 disordered regions span residues 1–21 (MQMP…RENQ) and 77–266 (PNEE…SFGE). Positions 83-92 (DNSRGRDRTR) are enriched in basic and acidic residues. The span at 133 to 160 (SRARSRRRSSSRRRHRNASMHMHFRGGS) shows a compositional bias: basic residues. The span at 162–171 (RSATGSQNLI) shows a compositional bias: polar residues. The span at 197-214 (RSSRVRRRHRRSSRRRGP) shows a compositional bias: basic residues. Over residues 235 to 259 (PISDIDQKRLRKNSDTSSRGTRESP) the composition is skewed to basic and acidic residues.

It belongs to the alphaherpesvirinae HHV-1 UL47 family. As to quaternary structure, interacts with US3 kinase. Interacts with UL31 and UL34; these interactions seem important for efficient virion nuclear egress. Interacts with UL41/VHS. Post-translationally, phosphorylated by US3. This phosphorylation is required for proper nuclear localization. In terms of processing, O-glycosylated.

The protein resides in the virion tegument. It is found in the host nucleus. The protein localises to the host cytoplasm. Tegument protein that can bind to various RNA transcripts. Plays a role in the attenuation of selective viral and cellular mRNA degradation by modulating the activity of host shutoff RNase UL41/VHS. Also plays a role in the primary envelopment of virions in the perinuclear space, probably by interacting with two nuclear egress proteins UL31 and UL34. Plays an important role in the splicing of glycoprotein/gC transcripts and thereby participates in bird-to-bird viral transmission. The protein is Tegument protein UL47 homolog (MDV060) of Gallus gallus (Chicken).